We begin with the raw amino-acid sequence, 1921 residues long: Putative callose synthase 6 (1921 aa).

Positions 1–23 (MEASSSGTAELPRSLSRRAPSRA) are disordered. Topologically, residues 1 to 492 (MEASSSGTAE…FWNLFRDFDR (492 aa)) are cytoplasmic. A helical transmembrane segment spans residues 493–513 (MWIFLVMAFQAMVIVGWHGSG). Residues 514-526 (SLGDIFDKDVFKT) lie on the Extracellular side of the membrane. A helical transmembrane segment spans residues 527–547 (VLTIFITSAYLTLLQAALDII). The Cytoplasmic segment spans residues 548 to 560 (LNFNAWKNFKFSQ). The helical transmembrane segment at 561-581 (ILRYLLKFAVAFMWAVLLPIA) threads the bilayer. Topologically, residues 582 to 611 (YSKSVQRPTGVVKFFSTWTGDWKDQSFYTY) are extracellular. Residues 612-632 (AVSFYVLPNILAALLFLVPPF) traverse the membrane as a helical segment. Topologically, residues 633–674 (RRAMECSDMRPIKVIMWWAQPKLYVGRGMHEDMFSLFKYTTF) are cytoplasmic. A helical membrane pass occupies residues 675 to 695 (WIMLLISKLAFNYYVEILPLI). Over 696 to 721 (TPTKMIMNLHIGHYQWHEFFPHATNN) the chain is Extracellular. The chain crosses the membrane as a helical span at residues 722-742 (IGVVIAIWAPIVLVYLMDTQI). Residues 743-1484 (WYAIFSTLFG…FDFYRMLSFY (742 aa)) are Cytoplasmic-facing. The helical transmembrane segment at 1485 to 1505 (FTTIGFYFSSMLTVLTVYAFL) threads the bilayer. Residues 1506 to 1540 (YGRMYMVMSGLEKEILRLASPNQLEALEQALATQS) lie on the Extracellular side of the membrane. The chain crosses the membrane as a helical span at residues 1541–1561 (IFQLGFLMVLPMVMEIGLEHG). The Cytoplasmic segment spans residues 1562 to 1564 (FRS). A helical transmembrane segment spans residues 1565–1585 (AIVDFFIMQLQLASVFFTFQL). The Extracellular portion of the chain corresponds to 1586–1628 (GTKSHYYGRTILHGGSKYRPTGRGFVVFHAKFAENYRLYSRSH). A helical transmembrane segment spans residues 1629–1649 (FVKGLELLLLLVVYQIYGHSY). At 1650-1655 (RSSNLY) the chain is on the cytoplasmic side. A helical transmembrane segment spans residues 1656-1676 (LYITVSMWFMVGSWLFAPFIF). Residues 1677 to 1730 (NPSGFEWQKTVDDWTDWKRWLGDRGGIGIPVEKSWESWWNVEQEHLKHTSIRGR) lie on the Extracellular side of the membrane. A helical membrane pass occupies residues 1731 to 1751 (ILEITLALRFFIYQYGIVYQL). The Cytoplasmic segment spans residues 1752-1759 (NISQRSKS). A helical membrane pass occupies residues 1760-1780 (FLVYGLSWVVLLTSLLVLKMV). At 1781–1796 (SMGRRRFGTDFQLMFR) the chain is on the extracellular side. Residues 1797-1817 (ILKALLFLGFLSVMTILFVVF) traverse the membrane as a helical segment. Residues 1818 to 1823 (KLTLTD) lie on the Cytoplasmic side of the membrane. A helical membrane pass occupies residues 1824 to 1844 (LSASVLAFLPTGWAILLIGQV). The Extracellular portion of the chain corresponds to 1845-1867 (LRSPIKALGVWDSVKELGRAYEN). A helical membrane pass occupies residues 1868–1888 (IMGLVIFAPIAVLSWFPIVSE). At 1889 to 1921 (FQARLLFNQAFSRGLQISMILAGRKDKATSSHK) the chain is on the cytoplasmic side.

The protein belongs to the glycosyltransferase 48 family.

Its subcellular location is the cell membrane. The catalysed reaction is [(1-&gt;3)-beta-D-glucosyl](n) + UDP-alpha-D-glucose = [(1-&gt;3)-beta-D-glucosyl](n+1) + UDP + H(+). Its function is as follows. Probably involved in callose synthesis, but not required for callose formation after wounding or pathogen attack. During plant growth and development, callose is found as a transitory component of the cell plate in dividing cells, is a major component of pollen mother cell walls and pollen tubes, and is found as a structural component of plasmodesmatal canals. The polypeptide is Putative callose synthase 6 (CALS6) (Arabidopsis thaliana (Mouse-ear cress)).